The primary structure comprises 919 residues: Exostosin-like 3 (919 aa).

The Cytoplasmic portion of the chain corresponds to 1–30 (MTGYTMLRNGGAGNGGQTCMLRWSNRIRLT). Residues 1–140 (MTGYTMLRNG…LKNVISQTEH (140 aa)) form a required for interaction with REG3A region. The helical; Signal-anchor for type II membrane protein transmembrane segment at 31–51 (WLSFTLFVILVFFPLIAHYYL) threads the bilayer. Residues 52–919 (TTLDEADEAG…HDKTKCFKFI (868 aa)) are Lumenal-facing. 2 disulfides stabilise this stretch: C177–C182 and C188–C236. N290 carries N-linked (GlcNAc...) asparagine glycosylation. S362 is subject to Phosphoserine. C400 and C415 are joined by a disulfide. A glycan (N-linked (GlcNAc...) asparagine) is linked at N592. Residues L668, R672, N697, N723, R728, D744, D745, and D746 each coordinate UDP-N-acetyl-alpha-D-glucosamine. A Mn(2+)-binding site is contributed by D746. Residue N790 is glycosylated (N-linked (GlcNAc...) asparagine). C831 and C879 are disulfide-bonded. Residues E832, D833, and R876 each coordinate UDP-N-acetyl-alpha-D-glucosamine. D833 is a catalytic residue.

Belongs to the glycosyltransferase 47 family. Homodimer; disulfide-linked. Interacts with REG3A. Requires Mn(2+) as cofactor. Ubiquitous. Expressed in keratinocytes. Expressed in pancreas.

The protein localises to the endoplasmic reticulum membrane. It localises to the golgi apparatus. It is found in the cell membrane. The protein resides in the nucleus. The enzyme catalyses 3-O-(beta-D-GlcA-(1-&gt;3)-beta-D-Gal-(1-&gt;3)-beta-D-Gal-(1-&gt;4)-beta-D-Xyl)-L-seryl-[protein] + UDP-N-acetyl-alpha-D-glucosamine = 3-O-(alpha-D-GlcNAc-(1-&gt;4)-beta-D-GlcA-(1-&gt;3)-beta-D-Gal-(1-&gt;3)-beta-D-Gal-(1-&gt;4)-beta-D-Xyl)-L-seryl-[protein] + UDP + H(+). Its pathway is glycan metabolism; heparan sulfate biosynthesis. Glycosyltransferase which regulates the biosynthesis of heparan sulfate (HS). Initiates HS synthesis by transferring the first N-acetyl-alpha-D-glucosamine (alpha-GlcNAc) residue (GlcNAcT-I activity) to the tetrasaccharide linker (GlcA-Gal-Gal-Xyl-)Ser core linker. May also transfer alpha-GlcNAc residues during HS elongation (GlcNAcT-II activity). Lacks glucuronyl transferase II (GlcAT-II) activity. Important for both skeletal development and hematopoiesis, through the formation of HS proteoglycans (HSPGs). Through the synthesis of HS, regulates postnatal pancreatic islet maturation and insulin secretion. Its function is as follows. Receptor for REG3A, REG3B and REG3G, induces the activation of downstream signaling pathways such as PI3K-AKT or RAS-RAF-MEK-ERK signaling pathway. Required for the function of REG3A in regulating keratinocyte proliferation and differentiation. Required for the inhibition of skin inflammation mediated by REG3A through the activation of PI3K-AKT-STAT3 pathway. Required for the function of REG3A and REG3G in glucose tolerance in pancreas. Expressed in microglia, is activated by nociceptor-derived REG3G in response to endotoxins, leading to the inhibition of kynurenine pathway to prevent endotoxic death. The sequence is that of Exostosin-like 3 from Homo sapiens (Human).